We begin with the raw amino-acid sequence, 468 residues long: Methylenetetrahydrofolate--tRNA-(uracil-5-)-methyltransferase TrmFO (468 aa).

13–18 (GGGLAG) is an FAD binding site.

Belongs to the MnmG family. TrmFO subfamily. The cofactor is FAD.

It localises to the cytoplasm. It carries out the reaction uridine(54) in tRNA + (6R)-5,10-methylene-5,6,7,8-tetrahydrofolate + NADH + H(+) = 5-methyluridine(54) in tRNA + (6S)-5,6,7,8-tetrahydrofolate + NAD(+). It catalyses the reaction uridine(54) in tRNA + (6R)-5,10-methylene-5,6,7,8-tetrahydrofolate + NADPH + H(+) = 5-methyluridine(54) in tRNA + (6S)-5,6,7,8-tetrahydrofolate + NADP(+). In terms of biological role, catalyzes the folate-dependent formation of 5-methyl-uridine at position 54 (M-5-U54) in all tRNAs. The polypeptide is Methylenetetrahydrofolate--tRNA-(uracil-5-)-methyltransferase TrmFO (Bartonella henselae (strain ATCC 49882 / DSM 28221 / CCUG 30454 / Houston 1) (Rochalimaea henselae)).